The sequence spans 483 residues: HSPB1-associated protein 1 (483 aa).

The interval 1-26 (MAAGCEGIAPPTLGERTVGEEGEPVK) is disordered. Positions 88–208 (ETECSYVDAT…EDTPFLYPTR (121 aa)) are interaction with HSPB1. The JmjC domain occupies 124–288 (WAYADYKYFV…HLARVEEAIT (165 aa)). The tract at residues 388–416 (LIPVTPASEERGGALEGDSEESVSSNGGH) is disordered.

In terms of assembly, interacts with CRYAB and HSPB1.

Its subcellular location is the cytoplasm. Functionally, may play a role in cellular stress response. The polypeptide is HSPB1-associated protein 1 (Hspbap1) (Mus musculus (Mouse)).